The following is a 200-amino-acid chain: Large ribosomal subunit protein uL4 (200 aa).

The tract at residues 43–71 is disordered; sequence RAQKTRAEVSGSGKKPWRQKGTGRARSGD.

This sequence belongs to the universal ribosomal protein uL4 family. In terms of assembly, part of the 50S ribosomal subunit.

Its function is as follows. One of the primary rRNA binding proteins, this protein initially binds near the 5'-end of the 23S rRNA. It is important during the early stages of 50S assembly. It makes multiple contacts with different domains of the 23S rRNA in the assembled 50S subunit and ribosome. Forms part of the polypeptide exit tunnel. This is Large ribosomal subunit protein uL4 from Histophilus somni (strain 129Pt) (Haemophilus somnus).